A 338-amino-acid polypeptide reads, in one-letter code: Ketol-acid reductoisomerase (NADP(+)) (338 aa).

The 181-residue stretch at 1–181 (MNVYYDKDCD…GGGRSGIIET (181 aa)) folds into the KARI N-terminal Rossmann domain. Residues 24 to 27 (YGSQ), arginine 47, serine 50, serine 52, and 82 to 85 (DEFQ) contribute to the NADP(+) site. Residue histidine 107 is part of the active site. Glycine 133 serves as a coordination point for NADP(+). The region spanning 182–327 (TFKDETETDL…AKLRGMMPWI (146 aa)) is the KARI C-terminal knotted domain. Residues aspartate 190, glutamate 194, glutamate 226, and glutamate 230 each coordinate Mg(2+). Serine 251 contributes to the substrate binding site.

The protein belongs to the ketol-acid reductoisomerase family. The cofactor is Mg(2+).

The catalysed reaction is (2R)-2,3-dihydroxy-3-methylbutanoate + NADP(+) = (2S)-2-acetolactate + NADPH + H(+). The enzyme catalyses (2R,3R)-2,3-dihydroxy-3-methylpentanoate + NADP(+) = (S)-2-ethyl-2-hydroxy-3-oxobutanoate + NADPH + H(+). Its pathway is amino-acid biosynthesis; L-isoleucine biosynthesis; L-isoleucine from 2-oxobutanoate: step 2/4. It participates in amino-acid biosynthesis; L-valine biosynthesis; L-valine from pyruvate: step 2/4. Involved in the biosynthesis of branched-chain amino acids (BCAA). Catalyzes an alkyl-migration followed by a ketol-acid reduction of (S)-2-acetolactate (S2AL) to yield (R)-2,3-dihydroxy-isovalerate. In the isomerase reaction, S2AL is rearranged via a Mg-dependent methyl migration to produce 3-hydroxy-3-methyl-2-ketobutyrate (HMKB). In the reductase reaction, this 2-ketoacid undergoes a metal-dependent reduction by NADPH to yield (R)-2,3-dihydroxy-isovalerate. In Psychrobacter arcticus (strain DSM 17307 / VKM B-2377 / 273-4), this protein is Ketol-acid reductoisomerase (NADP(+)).